The following is a 280-amino-acid chain: Probable endonuclease 4 (280 aa).

Zn(2+)-binding residues include histidine 69, histidine 109, glutamate 145, aspartate 179, histidine 182, histidine 216, aspartate 229, histidine 231, and glutamate 261.

This sequence belongs to the AP endonuclease 2 family. The cofactor is Zn(2+).

The enzyme catalyses Endonucleolytic cleavage to 5'-phosphooligonucleotide end-products.. Its function is as follows. Endonuclease IV plays a role in DNA repair. It cleaves phosphodiester bonds at apurinic or apyrimidinic (AP) sites, generating a 3'-hydroxyl group and a 5'-terminal sugar phosphate. This Actinobacillus pleuropneumoniae serotype 5b (strain L20) protein is Probable endonuclease 4.